A 29-amino-acid polypeptide reads, in one-letter code: Glucagon (29 aa).

Ser2 carries the post-translational modification Phosphoserine.

Belongs to the glucagon family.

It is found in the secreted. Functionally, glucagon plays a key role in glucose metabolism and homeostasis. Regulates blood glucose by increasing gluconeogenesis and decreasing glycolysis. This chain is Glucagon (GCG), found in Oryctolagus cuniculus (Rabbit).